Reading from the N-terminus, the 223-residue chain is Deoxyribose-phosphate aldolase (223 aa).

Asp-91 functions as the Proton donor/acceptor in the catalytic mechanism. Catalysis depends on Lys-153, which acts as the Schiff-base intermediate with acetaldehyde. The Proton donor/acceptor role is filled by Lys-183.

The protein belongs to the DeoC/FbaB aldolase family. DeoC type 1 subfamily.

It localises to the cytoplasm. It catalyses the reaction 2-deoxy-D-ribose 5-phosphate = D-glyceraldehyde 3-phosphate + acetaldehyde. The protein operates within carbohydrate degradation; 2-deoxy-D-ribose 1-phosphate degradation; D-glyceraldehyde 3-phosphate and acetaldehyde from 2-deoxy-alpha-D-ribose 1-phosphate: step 2/2. In terms of biological role, catalyzes a reversible aldol reaction between acetaldehyde and D-glyceraldehyde 3-phosphate to generate 2-deoxy-D-ribose 5-phosphate. The polypeptide is Deoxyribose-phosphate aldolase (Mycoplasmopsis synoviae (strain 53) (Mycoplasma synoviae)).